A 566-amino-acid polypeptide reads, in one-letter code: Urease subunit alpha (566 aa).

The region spanning 128–566 (GGIDSHVHFI…LPMAQRYFLF (439 aa)) is the Urease domain. 3 residues coordinate Ni(2+): H133, H135, and K216. K216 bears the N6-carboxylysine mark. H218 contacts substrate. H245 and H271 together coordinate Ni(2+). The active-site Proton donor is H319. Residue D359 coordinates Ni(2+).

The protein belongs to the metallo-dependent hydrolases superfamily. Urease alpha subunit family. As to quaternary structure, heterotrimer of UreA (gamma), UreB (beta) and UreC (alpha) subunits. Three heterotrimers associate to form the active enzyme. Requires Ni cation as cofactor. In terms of processing, carboxylation allows a single lysine to coordinate two nickel ions.

The protein resides in the cytoplasm. It catalyses the reaction urea + 2 H2O + H(+) = hydrogencarbonate + 2 NH4(+). The protein operates within nitrogen metabolism; urea degradation; CO(2) and NH(3) from urea (urease route): step 1/1. This chain is Urease subunit alpha, found in Nitrosococcus oceani (strain ATCC 19707 / BCRC 17464 / JCM 30415 / NCIMB 11848 / C-107).